The sequence spans 283 residues: MREVEKPLILSIVGNILLGLIKIIIGYVYSSISLISDGIHSLSDVITSIIGIIGVKIASKPPDESHPYGHSRFECLFSFFIGLALFFTAYEIGKFAVERIIYGEVIEVNAIMVGVAILSIVVKELMTRYSLFVGKKLNSQVLIADAYHHRSDALSSVVVLVGLLLQKFGIYYGDAIAGIIVALMIAKVAFDICLTNIDYLTGRAPPKKFFELIEKEALNVDKVIGVHDIKAHYVGPRIHVELHVEVPSNISAKEMHDIEVAVKNRLESLENVERAYVHVDIVD.

5 consecutive transmembrane segments (helical) span residues 8-28, 38-58, 73-93, 100-120, and 175-195; these read LILS…IGYV, GIHS…VKIA, FECL…YEIG, IIYG…ILSI, and AIAG…ICLT.

Belongs to the cation diffusion facilitator (CDF) transporter (TC 2.A.4) family.

Its subcellular location is the cell membrane. This is an uncharacterized protein from Methanocaldococcus jannaschii (strain ATCC 43067 / DSM 2661 / JAL-1 / JCM 10045 / NBRC 100440) (Methanococcus jannaschii).